We begin with the raw amino-acid sequence, 104 residues long: Large ribosomal subunit protein uL24 (104 aa).

It belongs to the universal ribosomal protein uL24 family. Part of the 50S ribosomal subunit.

One of two assembly initiator proteins, it binds directly to the 5'-end of the 23S rRNA, where it nucleates assembly of the 50S subunit. Its function is as follows. One of the proteins that surrounds the polypeptide exit tunnel on the outside of the subunit. The polypeptide is Large ribosomal subunit protein uL24 (Bartonella henselae (strain ATCC 49882 / DSM 28221 / CCUG 30454 / Houston 1) (Rochalimaea henselae)).